The following is a 95-amino-acid chain: Aspartyl/glutamyl-tRNA(Asn/Gln) amidotransferase subunit C (95 aa).

This sequence belongs to the GatC family. As to quaternary structure, heterotrimer of A, B and C subunits.

The catalysed reaction is L-glutamyl-tRNA(Gln) + L-glutamine + ATP + H2O = L-glutaminyl-tRNA(Gln) + L-glutamate + ADP + phosphate + H(+). It carries out the reaction L-aspartyl-tRNA(Asn) + L-glutamine + ATP + H2O = L-asparaginyl-tRNA(Asn) + L-glutamate + ADP + phosphate + 2 H(+). Its function is as follows. Allows the formation of correctly charged Asn-tRNA(Asn) or Gln-tRNA(Gln) through the transamidation of misacylated Asp-tRNA(Asn) or Glu-tRNA(Gln) in organisms which lack either or both of asparaginyl-tRNA or glutaminyl-tRNA synthetases. The reaction takes place in the presence of glutamine and ATP through an activated phospho-Asp-tRNA(Asn) or phospho-Glu-tRNA(Gln). In Dehalococcoides mccartyi (strain ATCC BAA-2100 / JCM 16839 / KCTC 5957 / BAV1), this protein is Aspartyl/glutamyl-tRNA(Asn/Gln) amidotransferase subunit C.